The following is a 664-amino-acid chain: Serine/threonine-protein kinase PknD (664 aa).

The Cytoplasmic portion of the chain corresponds to 1–381 (MSDAVPQVGS…PAGNKRKVWA (381 aa)). The region spanning 15 to 276 (YQLLRLLGRG…DLAIAAHDAL (262 aa)) is the Protein kinase domain. ATP is bound by residues 21–29 (LGRGGMGEV) and K44. T135 carries the post-translational modification Phosphothreonine; by autocatalysis. The Proton acceptor role is filled by D138. Phosphothreonine; by autocatalysis occurs at positions 169, 171, 173, and 209. Residues 303-333 (TGLSQSESGIAGAGTGPPTPGAARWSPGDSA) are disordered. The chain crosses the membrane as a helical span at residues 382–402 (VVGAAAIVLVAIVAAAGYLVL). The Extracellular portion of the chain corresponds to 403-664 (RPSWSPTQAS…GNDRVVKLTS (262 aa)). 6 NHL repeats span residues 414-456 (QTVL…LATG), 457-497 (STGT…LAAG), 498-539 (SNNQ…LAAG), 540-581 (SKTQ…LEAE), 582-623 (SNNQ…LLAG), and 624-664 (STTS…KLTS).

Belongs to the protein kinase superfamily. Ser/Thr protein kinase family. In terms of assembly, homodimer. The extracellular domain interacts with host laminin. In terms of processing, autophosphorylated. Dephosphorylated by PstP.

Its subcellular location is the cell membrane. The enzyme catalyses L-seryl-[protein] + ATP = O-phospho-L-seryl-[protein] + ADP + H(+). It catalyses the reaction L-threonyl-[protein] + ATP = O-phospho-L-threonyl-[protein] + ADP + H(+). Dimerization activates the kinase domain of unphosphorylated PknD via an allosteric mechanism, triggering autophosphorylation and phosphorylation of target proteins. Phosphorylated PknD is fully active even in the absence of dimerization. Part of a signaling pathway that enables adaptation to osmotic stress through cell wall remodeling and virulence factor production. Functionally, key microbial factor required for central nervous system tuberculosis. Required for invasion of host brain endothelia, but not macrophages, lung epithelia or other endothelia. This Mycobacterium tuberculosis (strain CDC 1551 / Oshkosh) protein is Serine/threonine-protein kinase PknD (pknD).